We begin with the raw amino-acid sequence, 329 residues long: Biotin synthase (329 aa).

In terms of domain architecture, Radical SAM core spans 48–278 (FVGDKVFLCS…TKRISICGGR (231 aa)). Positions 66, 70, and 73 each coordinate [4Fe-4S] cluster. 2 residues coordinate [2Fe-2S] cluster: serine 143 and cysteine 203.

This sequence belongs to the radical SAM superfamily. Biotin synthase family. Homodimer. Requires [4Fe-4S] cluster as cofactor. [2Fe-2S] cluster serves as cofactor.

It catalyses the reaction (4R,5S)-dethiobiotin + (sulfur carrier)-SH + 2 reduced [2Fe-2S]-[ferredoxin] + 2 S-adenosyl-L-methionine = (sulfur carrier)-H + biotin + 2 5'-deoxyadenosine + 2 L-methionine + 2 oxidized [2Fe-2S]-[ferredoxin]. Its pathway is cofactor biosynthesis; biotin biosynthesis; biotin from 7,8-diaminononanoate: step 2/2. In terms of biological role, catalyzes the conversion of dethiobiotin (DTB) to biotin by the insertion of a sulfur atom into dethiobiotin via a radical-based mechanism. This chain is Biotin synthase, found in Geotalea daltonii (strain DSM 22248 / JCM 15807 / FRC-32) (Geobacter daltonii).